We begin with the raw amino-acid sequence, 143 residues long: 3-dehydroquinate dehydratase (143 aa).

Tyrosine 22 functions as the Proton acceptor in the catalytic mechanism. Residues asparagine 73, histidine 79, and aspartate 86 each contribute to the substrate site. Residue histidine 99 is the Proton donor of the active site. Substrate contacts are provided by residues 100-101 (IS) and arginine 110.

Belongs to the type-II 3-dehydroquinase family. In terms of assembly, homododecamer.

The catalysed reaction is 3-dehydroquinate = 3-dehydroshikimate + H2O. It participates in metabolic intermediate biosynthesis; chorismate biosynthesis; chorismate from D-erythrose 4-phosphate and phosphoenolpyruvate: step 3/7. Catalyzes a trans-dehydration via an enolate intermediate. The sequence is that of 3-dehydroquinate dehydratase from Salinispora arenicola (strain CNS-205).